Reading from the N-terminus, the 809-residue chain is Glycerol-3-phosphate acyltransferase (809 aa).

The HXXXXD motif signature appears at 306 to 311 (HRSHMD).

Belongs to the GPAT/DAPAT family.

The protein localises to the cell inner membrane. It catalyses the reaction sn-glycerol 3-phosphate + an acyl-CoA = a 1-acyl-sn-glycero-3-phosphate + CoA. It participates in phospholipid metabolism; CDP-diacylglycerol biosynthesis; CDP-diacylglycerol from sn-glycerol 3-phosphate: step 1/3. The protein is Glycerol-3-phosphate acyltransferase of Vibrio vulnificus (strain CMCP6).